Reading from the N-terminus, the 607-residue chain is CRISPR-associated DNA-binding protein Cas12m (607 aa).

Residues 1–16 (MTRVTVQTAGVHYKWQ) form a wedge domain (WED-N) region. A recognition domain (REC) region spans residues 17-189 (MPDQLTQQLR…QLRHHRWDGT (173 aa)). Positions 50 to 124 (WSSYPAVAAL…IASVRDEATE (75 aa)) are roof in REC. Over residues 74–83 (ASTVKEEKSR) the composition is skewed to basic and acidic residues. The disordered stretch occupies residues 74–94 (ASTVKEEKSRQRTKRPSHPAV). Positions 190–315 (GTISVQLQRQ…KIPDQGEVDE (126 aa)) are wedge domain (WED-C). The ruvC-I stretch occupies residues 316–559 (GPTIAVHLGW…TVSHTGLSRV (244 aa)). The ruvC insertion stretch occupies residues 391–452 (SIRDTLVAWL…EGADIAETLE (62 aa)). The segment at 552 to 588 (SHTGLSRVHAACGHENPADDRYLMQPVLCDGCGRTYD) is target nucleic-acid binding (TNB). Zn(2+) contacts are provided by H560, C563, C580, and C583. The tract at residues 589–607 (TDLSATILMLQRASAATSN) is ruvC-II. Residue D590 participates in Mg(2+) binding.

Belongs to the CRISPR-associated DNA-binding protein Cas12m family. In terms of assembly, binds crRNA and target dsDNA as a monomer. The cofactor is Mg(2+). Zn(2+) is required as a cofactor.

Functionally, CRISPR (clustered regularly interspaced short palindromic repeat), is an adaptive immune system that provides protection against mobile genetic elements (viruses, transposable elements and conjugative plasmids). CRISPR clusters contain sequences complementary to antecedent mobile elements and target invading nucleic acids. CRISPR clusters are transcribed and processed into CRISPR RNA (crRNA). Recognizes a short motif in the CRISPR repeat sequences (the 5' PAM or protospacer adjacent motif, 5'-TTN-3' in this organism) to help distinguish self versus nonself, as targets within the bacterial CRISPR locus do not have PAMs. Upon expression in E.coli as a CRISPR locus inhibits plasmid propagation when targeted to regions essential for plasmid propagation (replication origin and a selectable marker); inhibits expression of a non-selectable marker, probably at the transcriptional level. Protects E.coli against bacteriophage M13mp18, to a lesser extent against lambda and VpaE1 as well as phage T4 with hydroxymethyl or unmodified (but not glycosylated) cytosines. Preferentially binds to its associated crRNA. Cas12m-crRNA binds DNA in a PAM-dependent, crRNA-guided fashion. Binds a 20-bp crRNA-ss-target DNA heteroduplex, in a 52 nucleotide crRNA. No dsDNA, ssDNA or RNA nuclease activity is seen for the crRNA-Cas12m complex. Probably required for pre-crRNA processing to mature crRNA. The polypeptide is CRISPR-associated DNA-binding protein Cas12m (Gordonia otitidis (strain DSM 44809 / CCUG 52243 / JCM 12355 / NBRC 100426 / IFM 10032)).